The primary structure comprises 260 residues: Acetylglutamate kinase (260 aa).

Substrate is bound by residues 46–47 (GG), Arg-68, and Asn-160.

The protein belongs to the acetylglutamate kinase family. ArgB subfamily.

Its subcellular location is the cytoplasm. The catalysed reaction is N-acetyl-L-glutamate + ATP = N-acetyl-L-glutamyl 5-phosphate + ADP. The protein operates within amino-acid biosynthesis; L-arginine biosynthesis; N(2)-acetyl-L-ornithine from L-glutamate: step 2/4. Its function is as follows. Catalyzes the ATP-dependent phosphorylation of N-acetyl-L-glutamate. This Shewanella denitrificans (strain OS217 / ATCC BAA-1090 / DSM 15013) protein is Acetylglutamate kinase.